The following is a 478-amino-acid chain: Zinc metalloproteinase/disintegrin VMP-II (478 aa).

Positions Met-1–Ser-20 are cleaved as a signal peptide. The propeptide occupies Ile-21–Glu-190. The region spanning Arg-197–Pro-393 is the Peptidase M12B domain. Positions 200 and 284 each coordinate Ca(2+). Disulfide bonds link Cys-308–Cys-388, Cys-348–Cys-372, and Cys-350–Cys-355. His-333 contacts Zn(2+). Glu-334 is a catalytic residue. 2 residues coordinate Zn(2+): His-337 and His-343. Cys-388 and Asn-391 together coordinate Ca(2+). Residues Leu-394 to Leu-405 constitute a propeptide that is removed on maturation. Residues Gly-414 to Ala-478 form the Disintegrin domain. 4 cysteine pairs are disulfide-bonded: Cys-420/Cys-443, Cys-434/Cys-440, Cys-439/Cys-464, and Cys-452/Cys-471. A Cell attachment site motif is present at residues Arg-456–Asp-458.

Belongs to the venom metalloproteinase (M12B) family. P-II subfamily. P-IIe sub-subfamily. In terms of assembly, heterodimer; disulfide-linked (disintegrin). Requires Zn(2+) as cofactor. As to expression, expressed by the venom gland.

Its subcellular location is the secreted. Impairs hemostasis in the envenomed animal. Functionally, this recombinant protein inhibits ADP-induced platelet aggregation in whole human blood and this effect is concentration-dependent with an IC(50) of 34 nM. The sequence is that of Zinc metalloproteinase/disintegrin VMP-II from Crotalus viridis viridis (Prairie rattlesnake).